Here is a 372-residue protein sequence, read N- to C-terminus: Actin-related protein T3 (372 aa).

Belongs to the actin family. Interacts with PFN3. In terms of tissue distribution, ubiquitously expressed.

The protein localises to the cytoplasm. The protein resides in the cytoskeleton. It is found in the nucleus. This chain is Actin-related protein T3 (ACTRT3), found in Homo sapiens (Human).